The primary structure comprises 162 residues: Transcription elongation factor GreA (162 aa).

The stretch at 45–75 (ENAEYEAAREKQAFIEGRIKELEDMAARAEI) forms a coiled coil.

The protein belongs to the GreA/GreB family.

Its function is as follows. Necessary for efficient RNA polymerase transcription elongation past template-encoded arresting sites. The arresting sites in DNA have the property of trapping a certain fraction of elongating RNA polymerases that pass through, resulting in locked ternary complexes. Cleavage of the nascent transcript by cleavage factors such as GreA or GreB allows the resumption of elongation from the new 3'terminus. GreA releases sequences of 2 to 3 nucleotides. The protein is Transcription elongation factor GreA of Rickettsia canadensis (strain McKiel).